The primary structure comprises 321 residues: MSKPIVMERGVKYRDADKMALIPVKNVVTERDALLRKPEWMKIKLPADSTRIQGIKAAMRKNGLHSVCEEASCPNLAECFNHGTATFMILGAICTRRCPFCDVAHGRPVAPDAEEPQKLAQTIADMALRYVVITSVDRDDLRDGGAQHFADCITAIRAKSPEIKIETLVPDFRGRMDRALDILNATPPDVFNHNLENVPRIYRQVRPGADYNWSLKLLERFKEAHPEIPTKSGLMVGLGETNAEIIEVMRDLRRHGVTMLTLGQYLQPSRHHLPVQRYVSPEEFDEMKAEALAMGFTHAACGPCVRSSYHADLQAKGMEVK.

Residues Cys68, Cys73, Cys79, Cys94, Cys98, Cys101, and Ser308 each contribute to the [4Fe-4S] cluster site. In terms of domain architecture, Radical SAM core spans 80-297; that stretch reads FNHGTATFMI…KAEALAMGFT (218 aa).

The protein belongs to the radical SAM superfamily. Lipoyl synthase family. [4Fe-4S] cluster is required as a cofactor.

It is found in the cytoplasm. It carries out the reaction [[Fe-S] cluster scaffold protein carrying a second [4Fe-4S](2+) cluster] + N(6)-octanoyl-L-lysyl-[protein] + 2 oxidized [2Fe-2S]-[ferredoxin] + 2 S-adenosyl-L-methionine + 4 H(+) = [[Fe-S] cluster scaffold protein] + N(6)-[(R)-dihydrolipoyl]-L-lysyl-[protein] + 4 Fe(3+) + 2 hydrogen sulfide + 2 5'-deoxyadenosine + 2 L-methionine + 2 reduced [2Fe-2S]-[ferredoxin]. Its pathway is protein modification; protein lipoylation via endogenous pathway; protein N(6)-(lipoyl)lysine from octanoyl-[acyl-carrier-protein]: step 2/2. In terms of biological role, catalyzes the radical-mediated insertion of two sulfur atoms into the C-6 and C-8 positions of the octanoyl moiety bound to the lipoyl domains of lipoate-dependent enzymes, thereby converting the octanoylated domains into lipoylated derivatives. The sequence is that of Lipoyl synthase from Salmonella typhi.